A 273-amino-acid chain; its full sequence is Putative phosphoenolpyruvate synthase regulatory protein (273 aa).

153–160 provides a ligand contact to ADP; the sequence is AVSRAGKT.

The protein belongs to the pyruvate, phosphate/water dikinase regulatory protein family. PSRP subfamily.

It carries out the reaction [pyruvate, water dikinase] + ADP = [pyruvate, water dikinase]-phosphate + AMP + H(+). The catalysed reaction is [pyruvate, water dikinase]-phosphate + phosphate + H(+) = [pyruvate, water dikinase] + diphosphate. Functionally, bifunctional serine/threonine kinase and phosphorylase involved in the regulation of the phosphoenolpyruvate synthase (PEPS) by catalyzing its phosphorylation/dephosphorylation. This is Putative phosphoenolpyruvate synthase regulatory protein from Xylella fastidiosa (strain 9a5c).